The primary structure comprises 576 residues: uncharacterized protein (576 aa).

2 stretches are compositionally biased toward polar residues: residues methionine 1–serine 21 and histidine 28–leucine 40. The interval methionine 1–leucine 40 is disordered. 12 helical membrane-spanning segments follow: residues phenylalanine 149–leucine 169, leucine 173–leucine 193, lysine 200–alanine 220, phenylalanine 231–methionine 251, isoleucine 261–phenylalanine 281, tryptophan 291–cysteine 311, proline 366–leucine 386, methionine 401–isoleucine 421, leucine 446–serine 466, valine 472–phenylalanine 492, tyrosine 503–phenylalanine 525, and glycine 542–phenylalanine 562.

It belongs to the major facilitator superfamily. CAR1 family.

It localises to the endoplasmic reticulum. The protein localises to the golgi apparatus. The protein resides in the membrane. This is an uncharacterized protein from Schizosaccharomyces pombe (strain 972 / ATCC 24843) (Fission yeast).